The sequence spans 68 residues: Large ribosomal subunit protein uL29 (68 aa).

The protein belongs to the universal ribosomal protein uL29 family.

The sequence is that of Large ribosomal subunit protein uL29 from Bradyrhizobium diazoefficiens (strain JCM 10833 / BCRC 13528 / IAM 13628 / NBRC 14792 / USDA 110).